The primary structure comprises 258 residues: Trans-aconitate 2-methyltransferase (258 aa).

Belongs to the methyltransferase superfamily. Tam family.

It localises to the cytoplasm. It carries out the reaction trans-aconitate + S-adenosyl-L-methionine = (E)-3-(methoxycarbonyl)pent-2-enedioate + S-adenosyl-L-homocysteine. In terms of biological role, catalyzes the S-adenosylmethionine monomethyl esterification of trans-aconitate. This Yersinia pseudotuberculosis serotype O:1b (strain IP 31758) protein is Trans-aconitate 2-methyltransferase.